The chain runs to 83 residues: MENDAGEFVDLYCPRKCSASNRIIHAKDHASIQLCVAEVDPQTGRMTDSTKSYALCGAIRRMGESDDCIVRLTKKDGILAKNF.

Belongs to the eukaryotic ribosomal protein eS21 family. In terms of assembly, component of the 40S small ribosomal subunit.

Its subcellular location is the cytoplasm. The protein resides in the cytosol. It is found in the rough endoplasmic reticulum. The chain is Small ribosomal subunit protein eS21 (RpS21) from Biphyllus lunatus (Beetle).